Here is a 910-residue protein sequence, read N- to C-terminus: Periodic tryptophan protein 2 homolog (910 aa).

WD repeat units follow at residues 12-50 (GTVY…SKTL), 53-92 (DCNY…KIYT), 94-134 (RSNK…KVYN), 144-183 (LSSD…NLFI), 188-227 (SHKG…GELV), 271-310 (GKSV…LVHN), 313-355 (VSEM…YVMK), 358-397 (AHSL…CTVT), 400-439 (EHTS…NFRT), 443-485 (PEPT…DILS), 486-523 (GHES…AETV), 525-563 (VSHE…NLGS), 586-625 (AKTK…ILKK), and 688-728 (RPEV…DPFQ). The segment at 867–910 (SKKSVKKEEEEEEDVSDESDDEDIEDESAGSDDEDSDDSVEIIE) is disordered. Over residues 875–910 (EEEEEDVSDESDDEDIEDESAGSDDEDSDDSVEIIE) the composition is skewed to acidic residues.

Belongs to the WD repeat PWP2 family.

The chain is Periodic tryptophan protein 2 homolog from Caenorhabditis elegans.